The following is a 388-amino-acid chain: (S)-8-oxocitronellyl enol synthase (388 aa).

Residues 38-40 (TGI), 66-67 (RR), 84-85 (DV), 108-109 (SW), and glutamine 142 each bind NADP(+). Residues lysine 146 and tyrosine 178 contribute to the active site. Substrate-binding residues include lysine 146 and tyrosine 178. NADP(+) contacts are provided by residues tyrosine 178, valine 204, and 211-213 (SMM). Substrate is bound at residue serine 349.

The protein belongs to the short-chain dehydrogenases/reductases (SDR) family. Highly divergent. Homodimer. In terms of tissue distribution, expressed in internal phloem-associated parenchyma (IPAP) cells.

Its subcellular location is the cytoplasm. The protein resides in the cytosol. It carries out the reaction (S)-8-oxocitronellyl enol + NADP(+) = (6E)-8-oxogeranial + NADPH + H(+). It catalyses the reaction (S)-8-oxocitronellyl enol + NAD(+) = (6E)-8-oxogeranial + NADH + H(+). Its function is as follows. Iridoid synthase that catalyzes the first step in generation of the iridoid ring scaffold using the linear monoterpene (6E)-8-oxogeranial as substrate. Iridoids comprise a large family of distinctive bicyclic monoterpenes that possess a wide range of pharmacological activities, including anticancer, anti-inflammatory, antifungal and antibacterial activities. The sequence is that of (S)-8-oxocitronellyl enol synthase from Catharanthus roseus (Madagascar periwinkle).